Here is a 376-residue protein sequence, read N- to C-terminus: TelA-like protein SE_1089 (376 aa).

It belongs to the TelA family.

In Staphylococcus epidermidis (strain ATCC 12228 / FDA PCI 1200), this protein is TelA-like protein SE_1089.